The following is an 818-amino-acid chain: Fibrous sheath CABYR-binding protein (818 aa).

Positions 1 to 61 (MEEKDESEQS…PKAALSIGNI (61 aa)) are disordered. S25, S57, and S182 each carry phosphoserine. 2 disordered regions span residues 195–727 (SFSK…PFIT) and 773–805 (LESG…NEGV). 3 stretches are compositionally biased toward low complexity: residues 490–511 (SPPA…PAEE), 544–560 (EAPA…PAEE), and 697–715 (AELQ…VSVE). Basic and acidic residues predominate over residues 773 to 794 (LESGNLDDKPKSEEPLERDTIP).

As to quaternary structure, interacts with CABYR. Interacts with ROPN1 and ROPN1L; the interaction increases upon spermatozoa capacitation conditions. In terms of processing, phosphorylated by PKA upon spermatozoa capacitation conditions.

It is found in the cell projection. Its subcellular location is the cilium. The protein resides in the flagellum. In terms of biological role, may be involved in the later stages of fibrous sheath biogenesis and spermatozoa capacitation. Inhibits ROPN1 and ROPN1L SUMOylation. Binds calcium. In Bos taurus (Bovine), this protein is Fibrous sheath CABYR-binding protein.